Here is a 161-residue protein sequence, read N- to C-terminus: S-ribosylhomocysteine lyase (161 aa).

Fe cation contacts are provided by His53, His57, and Cys124.

This sequence belongs to the LuxS family. In terms of assembly, homodimer. Requires Fe cation as cofactor.

The catalysed reaction is S-(5-deoxy-D-ribos-5-yl)-L-homocysteine = (S)-4,5-dihydroxypentane-2,3-dione + L-homocysteine. Involved in the synthesis of autoinducer 2 (AI-2) which is secreted by bacteria and is used to communicate both the cell density and the metabolic potential of the environment. The regulation of gene expression in response to changes in cell density is called quorum sensing. Catalyzes the transformation of S-ribosylhomocysteine (RHC) to homocysteine (HC) and 4,5-dihydroxy-2,3-pentadione (DPD). The protein is S-ribosylhomocysteine lyase of Phocaeicola vulgatus (strain ATCC 8482 / DSM 1447 / JCM 5826 / CCUG 4940 / NBRC 14291 / NCTC 11154) (Bacteroides vulgatus).